The sequence spans 292 residues: Quinolinate synthase (292 aa).

His8 and Ser25 together coordinate iminosuccinate. Cys70 serves as a coordination point for [4Fe-4S] cluster. Iminosuccinate contacts are provided by residues 96-98 and Ser113; that span reads YVN. Residue Cys158 participates in [4Fe-4S] cluster binding. Iminosuccinate is bound by residues 184-186 and Thr201; that span reads HPE. Cys244 lines the [4Fe-4S] cluster pocket.

This sequence belongs to the quinolinate synthase family. Type 2 subfamily. Requires [4Fe-4S] cluster as cofactor.

The protein localises to the cytoplasm. It carries out the reaction iminosuccinate + dihydroxyacetone phosphate = quinolinate + phosphate + 2 H2O + H(+). It functions in the pathway cofactor biosynthesis; NAD(+) biosynthesis; quinolinate from iminoaspartate: step 1/1. In terms of biological role, catalyzes the condensation of iminoaspartate with dihydroxyacetone phosphate to form quinolinate. The protein is Quinolinate synthase (nadA) of Methanopyrus kandleri (strain AV19 / DSM 6324 / JCM 9639 / NBRC 100938).